The sequence spans 699 residues: Elongation factor G (699 aa).

Positions 8-283 constitute a tr-type G domain; it reads EHIRNIGICA…AVVDFLPSPI (276 aa). GTP is bound by residues 17 to 24, 81 to 85, and 135 to 138; these read AHIDAGKT, DTPGH, and NKMD.

The protein belongs to the TRAFAC class translation factor GTPase superfamily. Classic translation factor GTPase family. EF-G/EF-2 subfamily.

Its subcellular location is the cytoplasm. Catalyzes the GTP-dependent ribosomal translocation step during translation elongation. During this step, the ribosome changes from the pre-translocational (PRE) to the post-translocational (POST) state as the newly formed A-site-bound peptidyl-tRNA and P-site-bound deacylated tRNA move to the P and E sites, respectively. Catalyzes the coordinated movement of the two tRNA molecules, the mRNA and conformational changes in the ribosome. This is Elongation factor G from Rickettsia conorii (strain ATCC VR-613 / Malish 7).